Here is a 469-residue protein sequence, read N- to C-terminus: Cysteine protease ATG4D (469 aa).

Residues 1–29 (MNSVSPLATQYGSPKGSQQMENRSTQSGG) are compositionally biased toward polar residues. The tract at residues 1–41 (MNSVSPLATQYGSPKGSQQMENRSTQSGGHEQRKMGHQDAT) is disordered. Cysteine 131 serves as the catalytic Nucleophile. A disordered region spans residues 169–191 (IRSSSPPSMPLSSLATGHSAGDY). Over residues 171–182 (SSSPPSMPLSSL) the composition is skewed to low complexity. Catalysis depends on residues aspartate 356 and histidine 358. The tract at residues 436-469 (QEYAEGPQSSSHPPVCRKKGPLVKRPSSDEFEFL) is disordered.

Belongs to the peptidase C54 family.

It is found in the cytoplasm. It carries out the reaction [protein]-C-terminal L-amino acid-glycyl-phosphatidylethanolamide + H2O = [protein]-C-terminal L-amino acid-glycine + a 1,2-diacyl-sn-glycero-3-phosphoethanolamine. The enzyme catalyses [protein]-C-terminal L-amino acid-glycyl-phosphatidylserine + H2O = [protein]-C-terminal L-amino acid-glycine + a 1,2-diacyl-sn-glycero-3-phospho-L-serine. Cysteine protease that plays a key role in autophagy by mediating both proteolytic activation and delipidation of ATG8 family proteins. The protease activity is required for proteolytic activation of ATG8 family proteins to reveal a C-terminal glycine. Exposure of the glycine at the C-terminus is essential for ATG8 proteins conjugation to phosphatidylethanolamine (PE) and insertion to membranes, which is necessary for autophagy. In addition to the protease activity, also mediates delipidation of ATG8 family proteins. Catalyzes delipidation of PE-conjugated forms of ATG8 proteins during macroautophagy. Also involved in non-canonical autophagy, a parallel pathway involving conjugation of ATG8 proteins to single membranes at endolysosomal compartments, by catalyzing delipidation of ATG8 proteins conjugated to phosphatidylserine (PS). The chain is Cysteine protease ATG4D from Xenopus laevis (African clawed frog).